Reading from the N-terminus, the 392-residue chain is MRKKLTALVLSALPLAAVADVSLYGEIKAGVEGRNYQLQLTEAQAANGGASGQVKVTKVTKAKSRIRTKISDFGSFIGFKGSEDLGDGLKAVWQLEQDVSVAGGGATQWGNRESFIGLAGEFGTLRAGRVANQFDDASQAIDPWDSNNDVASQLGIFKRHDDMPVSVRYDSPEFSGFSGSVQFVPIQNSKSAYTPAYYTKNTNNNLTLVPAVVGKPGSDVYYAGLNYKNGGFAGNYAFKYARHANVGRNAFELFLIGSGSDQAKGTDPLKNHQVHRLTGGYEEGGLNLALAAQLDLSENGDKTKNSTTEIAATASYRFGNAVPRISYAHGFDFIERGKKGENTSYDQIIAGVDYDFSKRTSAIVSGAWLKRNTGIGNYTQINAASVGLRHKF.

The N-terminal stretch at 1–19 is a signal peptide; it reads MRKKLTALVLSALPLAAVA.

It belongs to the Gram-negative porin family. In terms of assembly, homotrimer.

The protein resides in the cell outer membrane. Serves as a slightly cation selective porin. Major antigen on the gonococcal cell surface and it may have pathogenic properties in addition to its porin activity. This Neisseria meningitidis serogroup B (strain ATCC BAA-335 / MC58) protein is Major outer membrane protein P.IA (porA).